A 112-amino-acid chain; its full sequence is Large ribosomal subunit protein bL17 (112 aa).

The protein belongs to the bacterial ribosomal protein bL17 family. Part of the 50S ribosomal subunit. Contacts protein L32.

This Moorella thermoacetica (strain ATCC 39073 / JCM 9320) protein is Large ribosomal subunit protein bL17.